Consider the following 465-residue polypeptide: MAPSEKKLTEDKKNSSLNKKIETSNSSSEKSSENNNGDSQNNEAPKTFKELGVIDELCEACEKLGFKTPTPIQQEAIPVVLNKRDVIGLAQTGSGKTAAFALPVIQELWNNPSPFFAVVLAPTRELAYQISEQFEAIGGSIGVRSVVIVGGMDMVTQAVALSKKPHVLVCTPGRLMDHLENTKGFSLKNLKYLIMDEADRLLDMDFGPIIDKILKIIPHERRTLLFSATMTSKVEKLQRASLHQPVRVAVSSKFSTVDTLIQRYLFFPFKHKDTYLVYLVNELAGNSIIIFARTVNDTQRLAILLRTLGFSAIPLHGQLSQSNRLGALNKFKSGARSTLVATDVAARGLDIPLVDVVINYDIPTDSKAYIHRVGRTARAGRAGKSIALVTQYDLEPFLRIEATIGKKMQEYEIDKEGVFLLSERVGEAQREAIIQMKEIHDRRKSKGKLHTKRKRDDLDREEQIY.

Basic and acidic residues predominate over residues 1-22 (MAPSEKKLTEDKKNSSLNKKIE). The tract at residues 1 to 44 (MAPSEKKLTEDKKNSSLNKKIETSNSSSEKSSENNNGDSQNNEA) is disordered. Residues 23–36 (TSNSSSEKSSENNN) are compositionally biased toward low complexity. A Q motif motif is present at residues 46 to 74 (KTFKELGVIDELCEACEKLGFKTPTPIQQ). The Helicase ATP-binding domain occupies 77–248 (IPVVLNKRDV…RASLHQPVRV (172 aa)). 90–97 (AQTGSGKT) lines the ATP pocket. Residues 196 to 199 (DEAD) carry the DEAD box motif. The region spanning 275-419 (YLVYLVNELA…EYEIDKEGVF (145 aa)) is the Helicase C-terminal domain. Positions 442–453 (RRKSKGKLHTKR) are enriched in basic residues. Residues 442–465 (RRKSKGKLHTKRKRDDLDREEQIY) are disordered. Basic and acidic residues predominate over residues 454–465 (KRDDLDREEQIY).

This sequence belongs to the DEAD box helicase family. DDX47/RRP3 subfamily. In terms of assembly, interacts with the SSU processome.

The protein resides in the nucleus. It catalyses the reaction ATP + H2O = ADP + phosphate + H(+). Functionally, ATP-dependent rRNA helicase required for pre-ribosomal RNA processing. Involved in the maturation of the 35S-pre-rRNA and to its cleavage to mature 18S rRNA. The chain is ATP-dependent rRNA helicase rrp3 from Schizosaccharomyces pombe (strain 972 / ATCC 24843) (Fission yeast).